We begin with the raw amino-acid sequence, 465 residues long: ATP synthase subunit beta (465 aa).

An ATP-binding site is contributed by 148–155 (GGAGVGKT).

This sequence belongs to the ATPase alpha/beta chains family. As to quaternary structure, F-type ATPases have 2 components, CF(1) - the catalytic core - and CF(0) - the membrane proton channel. CF(1) has five subunits: alpha(3), beta(3), gamma(1), delta(1), epsilon(1). CF(0) has three main subunits: a(1), b(2) and c(9-12). The alpha and beta chains form an alternating ring which encloses part of the gamma chain. CF(1) is attached to CF(0) by a central stalk formed by the gamma and epsilon chains, while a peripheral stalk is formed by the delta and b chains.

The protein localises to the cell inner membrane. It catalyses the reaction ATP + H2O + 4 H(+)(in) = ADP + phosphate + 5 H(+)(out). Functionally, produces ATP from ADP in the presence of a proton gradient across the membrane. The catalytic sites are hosted primarily by the beta subunits. This is ATP synthase subunit beta from Neisseria gonorrhoeae (strain ATCC 700825 / FA 1090).